Consider the following 1327-residue polypeptide: P-glycoprotein 14 (1327 aa).

Basic and acidic residues predominate over residues 1-17 (MAPKDDPDNRGFDDQRR). Positions 1-23 (MAPKDDPDNRGFDDQRRPSQRST) are disordered. The Cytoplasmic segment spans residues 1–104 (MAPKDDPDNR…RYGKKFDYLL (104 aa)). A helical membrane pass occupies residues 105–125 (LFIGTICAIISGVSQPILALV). In terms of domain architecture, ABC transmembrane type-1 1 spans 106-394 (FIGTICAIIS…ISPHMMVLLN (289 aa)). Over 126–151 (SGRVTNALLVYPPTSKQFRNKANENV) the chain is Extracellular. A helical transmembrane segment spans residues 152–172 (YIFLGIGIFISITNFIQYMCF). The Cytoplasmic portion of the chain corresponds to 173–225 (QHCCTRVMAQMRHRFVYSVLRQNAGWFDKNHSGTITTKLNDSMERIREGIGDK). Residues 226 to 246 (LGVLLRGFAMLIAAIVVAYIY) traverse the membrane as a helical segment. Residue Glu247 is a topological domain, extracellular. A helical membrane pass occupies residues 248 to 268 (WRLASMMLGVAPTCCICMSLL). Residues 269 to 331 (ARQMTSTTIK…KFAVWKGFWS (63 aa)) lie on the Cytoplasmic side of the membrane. Residues 332–352 (GFFGGLFFFWLFSFLGCGMLY) form a helical membrane-spanning segment. The Extracellular portion of the chain corresponds to 353–364 (GAYLLKVGIITT). A helical transmembrane segment spans residues 365–385 (PGDVFIVVMSMLLGAYFLGLI). At 386–766 (SPHMMVLLNA…NAKGNYLYMF (381 aa)) the chain is on the cytoplasmic side. Positions 429 to 665 (VKFENVHFRY…GGRYFDLVKA (237 aa)) constitute an ABC transporter 1 domain. 464–471 (GHSGCGKS) is an ATP binding site. Residues 671-721 (DPEATEEFEEEEIDLDDTSRSSRRSSMTSARSGSEAFRRGNSLNDSFSGSK) form a disordered region. The span at 673–686 (EATEEFEEEEIDLD) shows a compositional bias: acidic residues. Positions 694–704 (RSSMTSARSGS) are enriched in low complexity. The segment covering 711 to 721 (NSLNDSFSGSK) has biased composition (polar residues). The ABC transmembrane type-1 2 domain maps to 766 to 1053 (FLGTVFALIR…SAQYFPEFVK (288 aa)). The chain crosses the membrane as a helical span at residues 767–789 (LGTVFALIRGLELPALALIFGWV). The Extracellular portion of the chain corresponds to 790 to 805 (FEGFTFVPYGGRMMHR). The helical transmembrane segment at 806 to 826 (MAMAVIAFASVGVGVWFSQLA) threads the bilayer. Topologically, residues 827–886 (SSVLFAVVSENLSMRFRVQSFRNLLYQDASYFDNPAHAPGKLITRLASDAPNIKAVVDAR) are cytoplasmic. A helical membrane pass occupies residues 887–907 (MLQVIYALAAIIANIAIAFIY). Topologically, residues 908–910 (CWQ) are extracellular. The chain crosses the membrane as a helical span at residues 911–931 (IGILGTSLILLLAFVMIGLAY). Residues 932-996 (KISLMNVEQI…KGMIEAINYS (65 aa)) lie on the Cytoplasmic side of the membrane. The helical transmembrane segment at 997–1017 (LTQSFMYFMMCFTYAVGIRII) threads the bilayer. Topologically, residues 1018–1030 (YQGDKSSDDTFKG) are extracellular. Residues 1031–1051 (IIAMMLGAVAVMNSAQYFPEF) form a helical membrane-spanning segment. At 1052–1327 (VKAKTAAGML…KLIKKQDLAV (276 aa)) the chain is on the cytoplasmic side. The 237-residue stretch at 1086–1322 (ILFENVKFSY…KGRYYKLIKK (237 aa)) folds into the ABC transporter 2 domain. Residue 1121–1128 (GPSGSGKS) coordinates ATP.

Belongs to the ABC transporter superfamily. ABCB family. Multidrug resistance exporter (TC 3.A.1.201) subfamily. Expressed in pharyngeal epithelial cells that surround the anterior pharyngeal cuticle. Shares same expression pattern as sms-5.

Its subcellular location is the apical cell membrane. Contributes to the establishment of a polar lipid barrier to block small molecule passage into the pharyngeal cuticle. Probably exports polar lipids into the developing pharyngeal cuticle to protect against xenobiotic insult. Likely functions in the same pathway as sphingomyelin synthase sms-5. The chain is P-glycoprotein 14 from Caenorhabditis elegans.